Consider the following 63-residue polypeptide: Sperm protamine P1 (63 aa).

Positions 1–63 (MARYRRHSRS…RYSRRGRRRY (63 aa)) are disordered.

Belongs to the protamine P1 family. As to expression, testis.

Its subcellular location is the nucleus. The protein resides in the chromosome. Its function is as follows. Protamines substitute for histones in the chromatin of sperm during the haploid phase of spermatogenesis. They compact sperm DNA into a highly condensed, stable and inactive complex. In Phascogale tapoatafa (Common wambenger), this protein is Sperm protamine P1 (PRM1).